The sequence spans 401 residues: Elongation factor Tu 2 (401 aa).

Residues 10–209 (KPHVNVGTIG…AVDEYIPTPV (200 aa)) enclose the tr-type G domain. Positions 19–26 (GHVDHGKT) are G1. 19–26 (GHVDHGKT) is a GTP binding site. Residue Thr26 participates in Mg(2+) binding. Residues 60 to 64 (GITIA) are G2. The G3 stretch occupies residues 81-84 (DCPG). GTP is bound by residues 81–85 (DCPGH) and 136–139 (NKVD). The tract at residues 136–139 (NKVD) is G4. Residues 174-176 (SAL) are G5.

The protein belongs to the TRAFAC class translation factor GTPase superfamily. Classic translation factor GTPase family. EF-Tu/EF-1A subfamily. Monomer.

The protein localises to the cytoplasm. It catalyses the reaction GTP + H2O = GDP + phosphate + H(+). GTP hydrolase that promotes the GTP-dependent binding of aminoacyl-tRNA to the A-site of ribosomes during protein biosynthesis. The chain is Elongation factor Tu 2 from Roseiflexus castenholzii (strain DSM 13941 / HLO8).